A 240-amino-acid chain; its full sequence is Uridylate kinase (240 aa).

Residue 12–15 (KLSG) participates in ATP binding. An involved in allosteric activation by GTP region spans residues 20–25 (GDQGYG). Residue Gly-54 participates in UMP binding. Positions 55 and 59 each coordinate ATP. Residues Asp-74 and 135–142 (TGNPYFST) contribute to the UMP site. Positions 163, 169, and 172 each coordinate ATP.

Belongs to the UMP kinase family. In terms of assembly, homohexamer.

The protein resides in the cytoplasm. The catalysed reaction is UMP + ATP = UDP + ADP. It functions in the pathway pyrimidine metabolism; CTP biosynthesis via de novo pathway; UDP from UMP (UMPK route): step 1/1. Allosterically activated by GTP. Inhibited by UTP. Its function is as follows. Catalyzes the reversible phosphorylation of UMP to UDP. The polypeptide is Uridylate kinase (Oceanobacillus iheyensis (strain DSM 14371 / CIP 107618 / JCM 11309 / KCTC 3954 / HTE831)).